Reading from the N-terminus, the 548-residue chain is Beta-caryophyllene synthase (548 aa).

The (2E,6E)-farnesyl diphosphate site is built by arginine 268, aspartate 305, aspartate 309, arginine 446, and aspartate 449. Mg(2+) contacts are provided by aspartate 305 and aspartate 309. Residues 305 to 309 (DDIYD) carry the DDXXD motif motif. Aspartate 449 and glutamate 457 together coordinate Mg(2+).

This sequence belongs to the terpene synthase family. Mg(2+) is required as a cofactor.

It catalyses the reaction (2E,6E)-farnesyl diphosphate = (-)-(E)-beta-caryophyllene + diphosphate. Its pathway is secondary metabolite biosynthesis; terpenoid biosynthesis. Sesquiterpene synthase that catalyzes the formation of sesquiterpenes and sesquiterpenoid alcohols. Converts farnesyl diphosphate (FPP) to beta-caryophyllene. Can use geranyl diphosphate (GPP) to produce myrcene, limonene and camphene. The sequence is that of Beta-caryophyllene synthase from Lavandula angustifolia (Lavender).